We begin with the raw amino-acid sequence, 141 residues long: Large ribosomal subunit protein uL11 (141 aa).

Belongs to the universal ribosomal protein uL11 family. As to quaternary structure, part of the ribosomal stalk of the 50S ribosomal subunit. Interacts with L10 and the large rRNA to form the base of the stalk. L10 forms an elongated spine to which L12 dimers bind in a sequential fashion forming a multimeric L10(L12)X complex. Post-translationally, one or more lysine residues are methylated.

Forms part of the ribosomal stalk which helps the ribosome interact with GTP-bound translation factors. In Carboxydothermus hydrogenoformans (strain ATCC BAA-161 / DSM 6008 / Z-2901), this protein is Large ribosomal subunit protein uL11.